We begin with the raw amino-acid sequence, 492 residues long: Probable cobyric acid synthase (492 aa).

The 193-residue stretch at 252–444 (PIEVNVVKFS…FHGILENFEF (193 aa)) folds into the GATase cobBQ-type domain. Residue Cys330 is the Nucleophile of the active site. His436 is an active-site residue.

This sequence belongs to the CobB/CobQ family. CobQ subfamily.

The protein operates within cofactor biosynthesis; adenosylcobalamin biosynthesis. Catalyzes amidations at positions B, D, E, and G on adenosylcobyrinic A,C-diamide. NH(2) groups are provided by glutamine, and one molecule of ATP is hydrogenolyzed for each amidation. The chain is Probable cobyric acid synthase from Methanococcus maripaludis (strain DSM 14266 / JCM 13030 / NBRC 101832 / S2 / LL).